The chain runs to 490 residues: Betaine aldehyde dehydrogenase (490 aa).

Positions 27 and 93 each coordinate K(+). 150–152 (GAW) contributes to the NAD(+) binding site. Catalysis depends on Lys-162, which acts as the Charge relay system. Position 176–179 (176–179 (KPSE)) interacts with NAD(+). Position 180 (Val-180) interacts with K(+). 230–233 (GTDT) contacts NAD(+). K(+) is bound at residue Leu-246. The active-site Proton acceptor is Glu-252. 3 residues coordinate NAD(+): Gly-254, Cys-286, and Glu-387. The Nucleophile role is filled by Cys-286. A Cysteine sulfenic acid (-SOH) modification is found at Cys-286. Residues Lys-457 and Gly-460 each contribute to the K(+) site. The active-site Charge relay system is the Glu-464.

Belongs to the aldehyde dehydrogenase family. In terms of assembly, dimer of dimers. The cofactor is K(+).

It catalyses the reaction betaine aldehyde + NAD(+) + H2O = glycine betaine + NADH + 2 H(+). It functions in the pathway amine and polyamine biosynthesis; betaine biosynthesis via choline pathway; betaine from betaine aldehyde: step 1/1. Involved in the biosynthesis of the osmoprotectant glycine betaine. Catalyzes the irreversible oxidation of betaine aldehyde to the corresponding acid. The chain is Betaine aldehyde dehydrogenase from Pseudomonas fluorescens (strain SBW25).